Consider the following 330-residue polypeptide: Exostosin-like 2 (330 aa).

Over 1-21 (MMRGCHICKLPGRVMGIRVLR) the chain is Cytoplasmic. Residues 22-42 (FSLVVILVLLLVAGALTNLLP) traverse the membrane as a helical; Signal-anchor for type II membrane protein segment. The Lumenal segment spans residues 43–330 (NIKEDKMLTL…FPYANHKSKM (288 aa)). Q72 serves as a coordination point for UDP-N-acetyl-alpha-D-galactosamine. Q72 contributes to the UDP-N-acetyl-alpha-D-glucosamine binding site. An N-linked (GlcNAc...) asparagine glycan is attached at N75. Positions 76, 101, 130, 135, 151, 152, 153, and 245 each coordinate UDP-N-acetyl-alpha-D-galactosamine. UDP-N-acetyl-alpha-D-glucosamine contacts are provided by R76, N101, N130, R135, D151, D152, D153, D245, D246, and R293. A Mn(2+)-binding site is contributed by D153. A disulfide bridge links C244 with C296. D246 is a catalytic residue. A UDP-N-acetyl-alpha-D-galactosamine-binding site is contributed by R293.

The protein belongs to the glycosyltransferase 47 family. The cofactor is Mn(2+).

It is found in the endoplasmic reticulum membrane. It catalyses the reaction 3-O-(beta-D-GlcA-(1-&gt;3)-beta-D-Gal-(1-&gt;3)-beta-D-Gal-(1-&gt;4)-beta-D-Xyl)-L-seryl-[protein] + UDP-N-acetyl-alpha-D-glucosamine = 3-O-(alpha-D-GlcNAc-(1-&gt;4)-beta-D-GlcA-(1-&gt;3)-beta-D-Gal-(1-&gt;3)-beta-D-Gal-(1-&gt;4)-beta-D-Xyl)-L-seryl-[protein] + UDP + H(+). Functionally, glycosyltransferase required for the biosynthesis of heparan-sulfate and responsible for the alternating addition of beta-1-4-linked glucuronic acid (GlcA) and alpha-1-4-linked N-acetylglucosamine (GlcNAc) units to nascent heparan sulfate chains. This is Exostosin-like 2 (Extl2) from Mus musculus (Mouse).